The primary structure comprises 272 residues: Phosphatidylglycerol--prolipoprotein diacylglyceryl transferase (272 aa).

The next 4 membrane-spanning stretches (helical) occupy residues 15–35, 53–73, 94–114, and 117–137; these read LGPLYVHMYSVFMLAGALVLF, AFAVTSLLIPVILGARLWHVV, GLGFIGGVFSGLICFFVIAKI, and VPPFTFLDALAPGILVALCFA. A 1,2-diacyl-sn-glycero-3-phospho-(1'-sn-glycerol) is bound at residue Arg-138. Helical transmembrane passes span 174-194, 199-219, and 237-257; these read FHPIFLYEIILNVFIIVILLV, VFVKTVFPKGSVFAAFLVLYG, and FGLDLNYVGAAAMIIVGVLIA.

Belongs to the Lgt family.

The protein resides in the cell membrane. It carries out the reaction L-cysteinyl-[prolipoprotein] + a 1,2-diacyl-sn-glycero-3-phospho-(1'-sn-glycerol) = an S-1,2-diacyl-sn-glyceryl-L-cysteinyl-[prolipoprotein] + sn-glycerol 1-phosphate + H(+). It participates in protein modification; lipoprotein biosynthesis (diacylglyceryl transfer). Its function is as follows. Catalyzes the transfer of the diacylglyceryl group from phosphatidylglycerol to the sulfhydryl group of the N-terminal cysteine of a prolipoprotein, the first step in the formation of mature lipoproteins. The polypeptide is Phosphatidylglycerol--prolipoprotein diacylglyceryl transferase (Tropheryma whipplei (strain TW08/27) (Whipple's bacillus)).